The chain runs to 256 residues: Cell division protein ZapD (256 aa).

The protein belongs to the ZapD family. In terms of assembly, interacts with FtsZ.

It is found in the cytoplasm. Functionally, cell division factor that enhances FtsZ-ring assembly. Directly interacts with FtsZ and promotes bundling of FtsZ protofilaments, with a reduction in FtsZ GTPase activity. The polypeptide is Cell division protein ZapD (Aromatoleum aromaticum (strain DSM 19018 / LMG 30748 / EbN1) (Azoarcus sp. (strain EbN1))).